Reading from the N-terminus, the 127-residue chain is Histidine-containing phosphotransfer protein 4 (127 aa).

The HPt domain occupies 27–122 (NPNFVEEVSA…STLRKKLEHY (96 aa)). His68 carries the post-translational modification Phosphohistidine.

As to quaternary structure, interacts with the B-type response regulators ARR1 and ARR2. Two-component system major event consists of a His-to-Asp phosphorelay between a sensor histidine kinase (HK) and a response regulator (RR). In plants, the His-to-Asp phosphorelay involves an additional intermediate named Histidine-containing phosphotransfer protein (HPt). This multistep phosphorelay consists of a His-Asp-His-Asp sequential transfer of a phosphate group between first a His and an Asp of the HK protein, followed by the transfer to a conserved His of the HPt protein and finally the transfer to an Asp in the receiver domain of the RR protein. In terms of tissue distribution, predominantly expressed in aerial parts of the plant.

Its subcellular location is the cytoplasm. The protein localises to the cytosol. It is found in the nucleus. Functionally, functions as a two-component phosphorelay mediator between cytokinin sensor histidine kinases and response regulators (B-type ARRs). Plays an important role in propagating cytokinin signal transduction through the multistep His-to-Asp phosphorelay. The sequence is that of Histidine-containing phosphotransfer protein 4 (AHP4) from Arabidopsis thaliana (Mouse-ear cress).